The chain runs to 548 residues: MTSTFAPTPLTQRAAWQALAAHYEQIREIHLRALFAEDPSRGERFALEAEGFYLDYSKNRLTDETLRLLSVLAEESDLRGRIEAMFSGEKINTTEQRSVLHTALRAPRGATVIEDGENVVPEVHAVLDRMAEFADRVRGGEWRGYTGRRIRTVVNIGIGGSYLGPDMAYDALKHYSDRDLKVRFAANVDGSNFAEVIHDLEPDETLFIVCSKTFTTLETMTNAHSARQWCLAALGDEQAIAKHFVAVSTNAAEVEKFGIDTAHMFGFWDWVGGRYSMDSAIGLSTMIAVGPEHFRAMLAGFHAMDEHFRTAPFERNLPVLMALIGLWYNNFFGAQTLAVLPYDYYLGKLPAYLQQLDMESNGKHVDIDGQPVTYQTGPIIWGQPGTDGQHSFYQLIHQGTKLIPCDFIGFCQTLNPIAPHHDQLMANFFAQTEALAFGKTEAEVRAEGVADWLLPHRVFEGNRPTNTLLAERLTPEVLGKLIALYEHKVFTQGVIWNLDSFDQWGVELGKVLAGRIIPELESAEEPELAHDSSTNALIRRYRRAKRQN.

Glu359 acts as the Proton donor in catalysis. Residues His390 and Lys510 contribute to the active site.

Belongs to the GPI family.

It is found in the cytoplasm. The catalysed reaction is alpha-D-glucose 6-phosphate = beta-D-fructose 6-phosphate. The protein operates within carbohydrate biosynthesis; gluconeogenesis. It functions in the pathway carbohydrate degradation; glycolysis; D-glyceraldehyde 3-phosphate and glycerone phosphate from D-glucose: step 2/4. Catalyzes the reversible isomerization of glucose-6-phosphate to fructose-6-phosphate. This Gloeobacter violaceus (strain ATCC 29082 / PCC 7421) protein is Glucose-6-phosphate isomerase.